A 388-amino-acid polypeptide reads, in one-letter code: Succinate--CoA ligase [ADP-forming] subunit beta (388 aa).

The 237-residue stretch at 9–245 folds into the ATP-grasp domain; sequence KALLKEYGMP…KSQENERELK (237 aa). ATP-binding positions include lysine 46, 53–55, glutamate 100, tyrosine 103, and glutamate 108; that span reads GRG. Mg(2+) contacts are provided by asparagine 200 and aspartate 214. Substrate-binding positions include asparagine 265 and 322–324; that span reads GIV.

This sequence belongs to the succinate/malate CoA ligase beta subunit family. In terms of assembly, heterotetramer of two alpha and two beta subunits. The cofactor is Mg(2+).

It carries out the reaction succinate + ATP + CoA = succinyl-CoA + ADP + phosphate. The catalysed reaction is GTP + succinate + CoA = succinyl-CoA + GDP + phosphate. Its pathway is carbohydrate metabolism; tricarboxylic acid cycle; succinate from succinyl-CoA (ligase route): step 1/1. Succinyl-CoA synthetase functions in the citric acid cycle (TCA), coupling the hydrolysis of succinyl-CoA to the synthesis of either ATP or GTP and thus represents the only step of substrate-level phosphorylation in the TCA. The beta subunit provides nucleotide specificity of the enzyme and binds the substrate succinate, while the binding sites for coenzyme A and phosphate are found in the alpha subunit. This Acinetobacter baumannii (strain SDF) protein is Succinate--CoA ligase [ADP-forming] subunit beta.